Consider the following 780-residue polypeptide: Copper-exporting P-type ATPase (780 aa).

In terms of domain architecture, HMA spans 2–67 (QRIQLNITGM…AVRRAALCTD (66 aa)). Residues cysteine 13 and cysteine 16 each contribute to the Cu(+) site. Helical transmembrane passes span 89–109 (LAVA…FAVL), 114–134 (FPGW…WAAW), 153–173 (TLIS…VFGH), 185–205 (ALLG…VFVL), 348–368 (VFVP…LIAG), and 374–394 (VFSA…GLAT). The 4-aspartylphosphate intermediate role is filled by aspartate 430. 2 helical membrane-spanning segments follow: residues 680–698 (FNMV…IAAA) and 704–722 (LVAG…SNSL).

This sequence belongs to the cation transport ATPase (P-type) (TC 3.A.3) family. Type IB subfamily.

It localises to the cell membrane. The catalysed reaction is Cu(+)(in) + ATP + H2O = Cu(+)(out) + ADP + phosphate + H(+). Functionally, involved in copper export. This is Copper-exporting P-type ATPase (ctpA) from Mycobacterium leprae (strain TN).